The following is a 277-amino-acid chain: UPF0276 protein PP_0992 (277 aa).

Belongs to the UPF0276 family.

The sequence is that of UPF0276 protein PP_0992 from Pseudomonas putida (strain ATCC 47054 / DSM 6125 / CFBP 8728 / NCIMB 11950 / KT2440).